The sequence spans 281 residues: Hexaprenyl pyrophosphate synthase (281 aa).

Residues K42, R45, and H74 each contribute to the isopentenyl diphosphate site. Mg(2+)-binding residues include D81 and D85. R91 is an isopentenyl diphosphate binding site.

Belongs to the FPP/GGPP synthase family. In terms of assembly, homodimer. Requires Mg(2+) as cofactor.

It carries out the reaction 2 isopentenyl diphosphate + (2E,6E,10E)-geranylgeranyl diphosphate = all-trans-hexaprenyl diphosphate + 2 diphosphate. Functionally, catalyzes consecutive E-type condensation of two isopentenyl pyrophosphate (IPP) molecules with an allylic substrate such as geranylgeranyl diphosphate (GGPP), farnesyl diphosphate (FPP) or geranyl diphosphate (GPP) to yield the medium-chain product trans-C30-hexaprenyl pyrophosphate (HexPP). GGPP is the physiological substrate. The chain is Hexaprenyl pyrophosphate synthase (gdS-2) from Saccharolobus solfataricus (strain ATCC 35092 / DSM 1617 / JCM 11322 / P2) (Sulfolobus solfataricus).